The primary structure comprises 718 residues: Mitotic spindle assembly checkpoint protein MAD1 (718 aa).

M1 bears the N-acetylmethionine mark. A Phosphoserine modification is found at S16. Positions 46–632 form a coiled coil; sequence QQSMQLEERA…QTKIQEFRKA (587 aa). Residue K61 is modified to N6-acetyllysine; alternate. K61 is covalently cross-linked (Glycyl lysine isopeptide (Lys-Gly) (interchain with G-Cter in SUMO2); alternate). The Nuclear localization signal motif lies at 79–82; that stretch reads KRAR. At S214 the chain carries Phosphoserine. The interval 301 to 340 is important for interaction with IK; it reads VGLELENERLLAKLQSWERLDQTMGLSIRTPEDLSRFVVE. The interval 380 to 532 is necessary for interaction with NEK2; that stretch reads LLEERKKRET…EAQLERRALQ (153 aa). S428 bears the Phosphoserine mark. Positions 439–480 are important for interaction with IK; sequence EDMVQKVHSHSAEMEAQLSQALEELGGQKQRADMLEMELKML. Residues 540–551 form a necessary for interaction with MAD2L1 region; sequence TKVLHMSLNPTS. Residues S598 and S610 each carry the phosphoserine modification. Residue Y634 is modified to Phosphotyrosine. A Phosphothreonine modification is found at T716.

It belongs to the MAD1 family. Homodimer. Dimerizes via its N- and C- terminal regions. Heterodimerizes with MAD2L1 in order to form a tetrameric MAD1L1-MAD2L1 core complex. Interacts with the closed conformation form of MAD2L1 (C-MAD2) and open conformation form of MAD2L1 (O-MAD2). It is unclear whether MAD1L1 dimerization promotes the conversion of closed to open conformation of MAD2L1. Formation of a heterotetrameric core complex containing two molecules each of MAD1L1 and of MAD2L1 promotes binding of another molecule of MAD2L1 to each MAD2L1, resulting in a heterohexamer. Perturbation of the original MAD1L1-MAD2L1 structure by the spindle checkpoint may decrease MAD2L1 affinity for MAD1L1. CDC20 can compete with MAD1L1 for MAD2L1 binding, until the attachment and/or tension dampen the checkpoint signal, preventing further release of MAD2L1 on to CDC20. Also able to interact with the BUB1/BUB3 complex. Interacts with NEK2. Interacts with TTK. Interacts with TPR; the interactions occurs in a microtubule-independent manner. Interacts with IK. Interacts with the viral Tax protein. Interacts with PRAP1. In terms of assembly, interacts with MAD2L1; this interaction leads to the cytoplasmic sequestration of MAD2L1. Interacts with PRAP1. In terms of processing, phosphorylated; by BUB1. Become hyperphosphorylated in late S through M phases or after mitotic spindle damage. Phosphorylated; by TTK. In terms of tissue distribution, expressed in hepatocellular carcinomas and hepatoma cell lines (at protein level).

The protein localises to the nucleus. It localises to the chromosome. It is found in the centromere. The protein resides in the kinetochore. Its subcellular location is the nucleus envelope. The protein localises to the cytoplasm. It localises to the cytoskeleton. It is found in the microtubule organizing center. The protein resides in the centrosome. Its subcellular location is the spindle. The protein localises to the spindle pole. Its function is as follows. Component of the spindle-assembly checkpoint that prevents the onset of anaphase until all chromosomes are properly aligned at the metaphase plate. Forms a heterotetrameric complex with the closed conformation form of MAD2L1 (C-MAD2) at unattached kinetochores during prometaphase, recruits an open conformation of MAD2L1 (O-MAD2) and promotes the conversion of O-MAD2 to C-MAD2, which ensures mitotic checkpoint signaling. In terms of biological role, sequesters MAD2L1 in the cytoplasm preventing its function as an activator of the mitotic spindle assembly checkpoint (SAC) resulting in SAC impairment and chromosomal instability in hepatocellular carcinomas. The chain is Mitotic spindle assembly checkpoint protein MAD1 (MAD1L1) from Homo sapiens (Human).